The following is a 92-amino-acid chain: Small ribosomal subunit protein uS17 (92 aa).

The protein belongs to the universal ribosomal protein uS17 family. In terms of assembly, part of the 30S ribosomal subunit.

One of the primary rRNA binding proteins, it binds specifically to the 5'-end of 16S ribosomal RNA. This is Small ribosomal subunit protein uS17 from Bordetella petrii (strain ATCC BAA-461 / DSM 12804 / CCUG 43448).